The chain runs to 452 residues: Tubulin beta-2 chain (452 aa).

Q11, E72, S141, G145, T146, G147, N207, and N229 together coordinate GTP. A Mg(2+)-binding site is contributed by E72. Residues 414–452 (AESNMNDPVAEYQQYQDATADDEEEYDDEAADDHHQYES) are disordered. The span at 432-444 (TADDEEEYDDEAA) shows a compositional bias: acidic residues.

It belongs to the tubulin family. In terms of assembly, dimer of alpha and beta chains. A typical microtubule is a hollow water-filled tube with an outer diameter of 25 nm and an inner diameter of 15 nM. Alpha-beta heterodimers associate head-to-tail to form protofilaments running lengthwise along the microtubule wall with the beta-tubulin subunit facing the microtubule plus end conferring a structural polarity. Microtubules usually have 13 protofilaments but different protofilament numbers can be found in some organisms and specialized cells. It depends on Mg(2+) as a cofactor.

Its subcellular location is the cytoplasm. The protein resides in the cytoskeleton. In terms of biological role, tubulin is the major constituent of microtubules, a cylinder consisting of laterally associated linear protofilaments composed of alpha- and beta-tubulin heterodimers. Microtubules grow by the addition of GTP-tubulin dimers to the microtubule end, where a stabilizing cap forms. Below the cap, tubulin dimers are in GDP-bound state, owing to GTPase activity of alpha-tubulin. The polypeptide is Tubulin beta-2 chain (TUBB2) (Solanum tuberosum (Potato)).